The sequence spans 92 residues: UPF0358 protein Exig_1994 (92 aa).

Belongs to the UPF0358 family.

In Exiguobacterium sibiricum (strain DSM 17290 / CCUG 55495 / CIP 109462 / JCM 13490 / 255-15), this protein is UPF0358 protein Exig_1994.